A 316-amino-acid polypeptide reads, in one-letter code: Methionyl-tRNA formyltransferase (316 aa).

Ser108–Pro111 provides a ligand contact to (6S)-5,6,7,8-tetrahydrofolate.

Belongs to the Fmt family.

The enzyme catalyses L-methionyl-tRNA(fMet) + (6R)-10-formyltetrahydrofolate = N-formyl-L-methionyl-tRNA(fMet) + (6S)-5,6,7,8-tetrahydrofolate + H(+). Its function is as follows. Attaches a formyl group to the free amino group of methionyl-tRNA(fMet). The formyl group appears to play a dual role in the initiator identity of N-formylmethionyl-tRNA by promoting its recognition by IF2 and preventing the misappropriation of this tRNA by the elongation apparatus. The protein is Methionyl-tRNA formyltransferase of Heliobacterium modesticaldum (strain ATCC 51547 / Ice1).